A 295-amino-acid chain; its full sequence is AP-1-like transcription factor YAP4 (295 aa).

3 positions are modified to phosphoserine: S85, S89, and S196. The segment covering 181-202 (ASYFPSNSTPATRKNSATTNLP) has biased composition (polar residues). The disordered stretch occupies residues 181-205 (ASYFPSNSTPATRKNSATTNLPSEE). The region spanning 237–295 (PLRNTKRAAQNRSAQKAFRQRREKYIKNLEEKSKLFDGLMKENSELKKMIESLKSKLKE) is the bZIP domain. Residues 239 to 260 (RNTKRAAQNRSAQKAFRQRREK) are basic motif. Positions 262 to 271 (IKNLEEKSKL) are leucine-zipper.

The protein belongs to the bZIP family. YAP subfamily. In terms of assembly, homodimer.

The protein localises to the cytoplasm. It is found in the nucleus. In terms of biological role, transcription activator involved in the regulation of genes expressed in response to environmental changes and metabolic requirements. According to genome-wide promoter binding and gene expression studies it regulates, among others, genes involved in ribosome biogenesis, and protein synthesis. It may also be involved in pleiotropic drug resistance. When overexpressed it confers increased resistance to cisplatin, the DNA-alkylating agents methylmethanosulfonate, and mitomycin C, the antimalarial drugs quinidine, mefloquine, and chloroquine, and increases cellular tolerance to sodium and lithium. Preferentially binds 5'-TTACTAA-3'. The protein is AP-1-like transcription factor YAP4 (CIN5) of Saccharomyces cerevisiae (strain ATCC 204508 / S288c) (Baker's yeast).